The primary structure comprises 716 residues: Putative proline--tRNA ligase C19C7.06 (716 aa).

The interval 655 to 675 (KNSARQVNGDEPEDEKAPSMG) is disordered.

The protein belongs to the class-II aminoacyl-tRNA synthetase family.

It localises to the cytoplasm. The catalysed reaction is tRNA(Pro) + L-proline + ATP = L-prolyl-tRNA(Pro) + AMP + diphosphate. This chain is Putative proline--tRNA ligase C19C7.06 (prs1), found in Schizosaccharomyces pombe (strain 972 / ATCC 24843) (Fission yeast).